A 79-amino-acid chain; its full sequence is Conotoxin VnMEKL-024 (79 aa).

Residues 1–19 (MQKLTILLLVAAVLMSTQA) form the signal peptide. Positions 20-50 (LIRGGVEKRQEAKRNFFSKRKTTAESWWEGE) are excised as a propeptide. Disulfide bonds link cysteine 51-cysteine 65, cysteine 58-cysteine 69, and cysteine 64-cysteine 76.

This sequence belongs to the conotoxin O2 superfamily. As to expression, expressed by the venom duct.

Its subcellular location is the secreted. This Conus ventricosus (Mediterranean cone) protein is Conotoxin VnMEKL-024.